Here is a 56-residue protein sequence, read N- to C-terminus: Putative 2-Cys peroxiredoxin BAS1 (56 aa).

The protein belongs to the peroxiredoxin family. AhpC/Prx1 subfamily. As to quaternary structure, homodimer; disulfide-linked, upon oxidation.

The protein localises to the plastid. Its subcellular location is the chloroplast. The enzyme catalyses a hydroperoxide + [thioredoxin]-dithiol = an alcohol + [thioredoxin]-disulfide + H2O. Its function is as follows. Thiol-specific peroxidase that catalyzes the reduction of hydrogen peroxide and organic hydroperoxides to water and alcohols, respectively. Plays a role in cell protection against oxidative stress by detoxifying peroxides. May be an antioxidant enzyme particularly in the developing shoot and photosynthesizing leaf. The sequence is that of Putative 2-Cys peroxiredoxin BAS1 from Pinus strobus (Eastern white pine).